The following is a 280-amino-acid chain: MVFSVATSSVTNPKLHHHHHLSDFNRNRVSTSLKIMNSKNHTNPRKCECFDLYDQLIPYKKAWSWQKSILNEKKALIDKNQECSDSLIILQHPSVYTMGTGSSENYLNFDIKNAPFDVYRTERGGEVTYHGPGQLVMYPIINLRNHKMDLHWYLRKLEEVVIRVLSSAFAINASRLDGFTGVWVGNKKMAAIGIRVSKWMTYHGLALNVTTDLTPFNSIVPCGIRNRGVGSVKGLIEDGEHYNKLEDLQLLDIAHESLLKEFSEVFQLQMEKQTVFKLEC.

A chloroplast-targeting transit peptide spans 1 to 34; it reads MVFSVATSSVTNPKLHHHHHLSDFNRNRVSTSLK. Residues 81 to 270 form the BPL/LPL catalytic domain; the sequence is QECSDSLIIL…EFSEVFQLQM (190 aa). Residues 123-130, 191-193, and 204-206 each bind substrate; these read RGGEVTYH, AIG, and GLA. Cysteine 222 acts as the Acyl-thioester intermediate in catalysis.

The protein belongs to the LipB family. As to expression, expressed in roots, leaves, cauline leaves, stems, siliques and flowers.

It localises to the plastid. The protein resides in the chloroplast. The enzyme catalyses octanoyl-[ACP] + L-lysyl-[protein] = N(6)-octanoyl-L-lysyl-[protein] + holo-[ACP] + H(+). The protein operates within protein modification; protein lipoylation via endogenous pathway; protein N(6)-(lipoyl)lysine from octanoyl-[acyl-carrier-protein]: step 1/2. Its function is as follows. Catalyzes the transfer of endogenously produced octanoic acid from octanoyl-acyl-carrier-protein onto the lipoyl domains of lipoate-dependent enzymes. Lipoyl-ACP can also act as a substrate although octanoyl-ACP is likely to be the physiological substrate. Together with LIP1P is essential for de novo plastidial protein lipoylation during seed development. Acts redundantly with LIP2P. The chain is Octanoyltransferase LIP2p2, chloroplastic from Arabidopsis thaliana (Mouse-ear cress).